The sequence spans 421 residues: Periplasmic [Fe] hydrogenase large subunit (421 aa).

2 4Fe-4S ferredoxin-type domains span residues 26-57 (HFVQ…MGEP) and 59-86 (SIPH…EAQS). C35, C38, C41, C45, C66, C69, C72, C76, C179, C234, C378, and C382 together coordinate [4Fe-4S] cluster. Position 382 (C382) interacts with Fe(2+).

As to quaternary structure, heterodimer of a large and a small subunit. [4Fe-4S] cluster is required as a cofactor. The cofactor is Fe(2+).

It is found in the periplasm. It carries out the reaction H2 + 2 oxidized [2Fe-2S]-[ferredoxin] = 2 reduced [2Fe-2S]-[ferredoxin] + 2 H(+). In terms of biological role, may be involved in hydrogen uptake for the reduction of sulfate to hydrogen sulfide in an electron transport chain. Cytochrome c3 is likely to be the physiological electron carrier for the enzyme. The chain is Periplasmic [Fe] hydrogenase large subunit (hydA) from Nitratidesulfovibrio vulgaris (strain ATCC 29579 / DSM 644 / CCUG 34227 / NCIMB 8303 / VKM B-1760 / Hildenborough) (Desulfovibrio vulgaris).